The following is a 191-amino-acid chain: uncharacterized protein (191 aa).

One can recognise an HTH tetR-type domain in the interval 6-66 (GLTQKMIVDA…ELAVRGLTKL (61 aa)). Residues 29-48 (SLAALSKKMNVRPPSLYNHI) constitute a DNA-binding region (H-T-H motif).

This is an uncharacterized protein from Bacillus subtilis (strain 168).